A 566-amino-acid polypeptide reads, in one-letter code: MNWAISNLTGGNRVSRAILVRYSSVPLADATNDGSSTAPQTPTASTPRPSSSHSSLSSTFAATFLHASSRHIPGRAVPRQNANGQNGGKGNASGAGGGAGGGGAGGASGGTGGTGAQAAGQLSLPLDVEETVTCFCRKARRKERDGDQNSTDTKLYLEESVLERKLPEADLKALVDLPAGLDYNEWLASHTLALFEHVNLVYGTISEFCTQSGCADMTGPGNRTYLWFDEKGKKTRVAAPQYIDYVMTFTQKTVSDESIFPTKYANEFPGSFESIARKILRLQFHVIAHLYAAHFREIALLGLHTHLNLTFAHLTALHRRFNLIDEKETDVLRDLEVALRLTDDTGGCQDATSTTSSVHDHSHSGDLQHQSLQQQQQHHNSSSNSTSSAEAFHVNSQSNNGSTSASASVSLIDGDAVAPPICTQPEAGAGCKPAGSSGLLGGILGDLTSGEFGDTTRYCTSAVPQAAAAAGAGVGGTAIGATDAAALNNGAGALHLNFSNNNNNNHNLNHHHHHHHHHGHHGHHHAAQQQQQHSGLIQCNAAGGGGNATGVATGGATAAASSTTTA.

Disordered regions lie at residues 28–57 and 74–118; these read ADAT…SSLS and GRAV…GAQA. The segment covering 35–57 has biased composition (low complexity); that stretch reads SSTAPQTPTASTPRPSSSHSSLS. Residues 85 to 115 are compositionally biased toward gly residues; that stretch reads QNGGKGNASGAGGGAGGGGAGGASGGTGGTG. Zn(2+) is bound by residues cysteine 209, cysteine 214, histidine 289, and histidine 294. 2 disordered regions span residues 346-407 and 498-541; these read GGCQ…SASA and FSNN…QCNA. The segment covering 367–388 has biased composition (low complexity); that stretch reads LQHQSLQQQQQHHNSSSNSTSS. The span at 394 to 407 shows a compositional bias: polar residues; it reads VNSQSNNGSTSASA. Over residues 498 to 507 the composition is skewed to low complexity; sequence FSNNNNNNHN. The span at 508–526 shows a compositional bias: basic residues; sequence LNHHHHHHHHHGHHGHHHA.

It belongs to the MOB1/phocein family. As to quaternary structure, interacts with and activates trc, also interacts with wts.

It is found in the cytoplasm. Its subcellular location is the nucleus. Functionally, required for the normal morphogenesis of a variety of polarized outgrowths including epidermal hairs, bristles, arista laterals, and dendrites. In Drosophila melanogaster (Fruit fly), this protein is MOB kinase activator-like 2 (Mob2).